The following is a 452-amino-acid chain: UDP-glycosyltransferase 79B11 (452 aa).

Residues Ser260, 319-325 (VQQPSWQ), 340-348 (HCGFGSMWE), and 362-365 (LNDQ) contribute to the UDP-alpha-D-glucose site.

The protein belongs to the UDP-glycosyltransferase family.

In Arabidopsis thaliana (Mouse-ear cress), this protein is UDP-glycosyltransferase 79B11 (UGT79B11).